The primary structure comprises 195 residues: Putative CheY-P phosphatase CheC1 (195 aa).

It belongs to the CheC family.

Catalyzes the dephosphorylation of CheY-P. The polypeptide is Putative CheY-P phosphatase CheC1 (cheC1) (Halobacterium salinarum (strain ATCC 29341 / DSM 671 / R1)).